The chain runs to 1053 residues: Putative ABC transporter C family member 15 (1053 aa).

Residues 1 to 180 (MSVDVQRITD…LPDLLSALVQ (180 aa)) enclose the ABC transmembrane type-1 1 domain. A run of 4 helical transmembrane segments spans residues 11 to 31 (FIWY…AIYI), 36 to 56 (LGLG…CNYP), 125 to 145 (FILW…CMLM), and 151 to 171 (AGAV…IFGL). The ABC transporter 1 domain occupies 214–437 (VEIENGAFSW…NIGFEVLTQC (224 aa)). Residue 249–256 (GAVGSGKS) coordinates ATP. A run of 5 helical transmembrane segments spans residues 481-503 (LLVP…SNYW), 523-543 (ILLV…ARTI), 595-615 (MAVK…TIFV), 714-734 (LSHF…EGVI), and 738-758 (IAGL…TVIW). The ABC transmembrane type-1 2 domain occupies 483–765 (VPFIILAQSC…VIWNICNAEN (283 aa)). Residues 804–1036 (FRDLQVRYAE…EDSFFSKLIK (233 aa)) enclose the ABC transporter 2 domain. Residue 836-843 (GRTGSGKS) participates in ATP binding.

The protein belongs to the ABC transporter superfamily. ABCC family. Conjugate transporter (TC 3.A.1.208) subfamily.

It localises to the membrane. The catalysed reaction is ATP + H2O + xenobioticSide 1 = ADP + phosphate + xenobioticSide 2.. Functionally, pump for glutathione S-conjugates. This Arabidopsis thaliana (Mouse-ear cress) protein is Putative ABC transporter C family member 15 (ABCC15).